A 735-amino-acid chain; its full sequence is Translation initiation factor IF-2, chloroplastic (735 aa).

The region spanning R239 to Y411 is the tr-type G domain. The tract at residues G248–T255 is G1. A GTP-binding site is contributed by G248 to T255. The tract at residues G273 to K277 is G2. Residues D298–G301 are G3. GTP contacts are provided by residues D298–H302 and N352–D355. The segment at N352–D355 is G4. The tract at residues S388–S390 is G5.

This sequence belongs to the TRAFAC class translation factor GTPase superfamily. Classic translation factor GTPase family. IF-2 subfamily.

The protein resides in the plastid. The protein localises to the chloroplast. Its function is as follows. One of the essential components for the initiation of protein synthesis. Protects formylmethionyl-tRNA from spontaneous hydrolysis and promotes its binding to the 30S ribosomal subunits. Also involved in the hydrolysis of GTP during the formation of the 70S ribosomal complex. The sequence is that of Translation initiation factor IF-2, chloroplastic (infB) from Guillardia theta (Cryptophyte).